The chain runs to 590 residues: Major surface protein MspTL (590 aa).

An N-terminal signal peptide occupies residues 1-19 (MKKILAFFLVFALAGAVFA).

It is found in the cell outer membrane. Functionally, major component of the outer membrane. The sequence is that of Major surface protein MspTL (mspTL) from Treponema lecithinolyticum.